Consider the following 357-residue polypeptide: Dual-specificity RNA methyltransferase RlmN (357 aa).

The Proton acceptor role is filled by E89. One can recognise a Radical SAM core domain in the interval 109–340; that stretch reads EGEKYTVCVS…CTIRESKALD (232 aa). An intrachain disulfide couples C116 to C345. 3 residues coordinate [4Fe-4S] cluster: C123, C127, and C130. S-adenosyl-L-methionine-binding positions include 173 to 174, S203, 226 to 228, and N302; these read GE and SLH. The S-methylcysteine intermediate role is filled by C345.

Belongs to the radical SAM superfamily. RlmN family. The cofactor is [4Fe-4S] cluster.

It localises to the cytoplasm. The enzyme catalyses adenosine(2503) in 23S rRNA + 2 reduced [2Fe-2S]-[ferredoxin] + 2 S-adenosyl-L-methionine = 2-methyladenosine(2503) in 23S rRNA + 5'-deoxyadenosine + L-methionine + 2 oxidized [2Fe-2S]-[ferredoxin] + S-adenosyl-L-homocysteine. The catalysed reaction is adenosine(37) in tRNA + 2 reduced [2Fe-2S]-[ferredoxin] + 2 S-adenosyl-L-methionine = 2-methyladenosine(37) in tRNA + 5'-deoxyadenosine + L-methionine + 2 oxidized [2Fe-2S]-[ferredoxin] + S-adenosyl-L-homocysteine. In terms of biological role, specifically methylates position 2 of adenine 2503 in 23S rRNA and position 2 of adenine 37 in tRNAs. m2A2503 modification seems to play a crucial role in the proofreading step occurring at the peptidyl transferase center and thus would serve to optimize ribosomal fidelity. The protein is Dual-specificity RNA methyltransferase RlmN of Helicobacter pylori (strain HPAG1).